Here is a 452-residue protein sequence, read N- to C-terminus: tRNA modification GTPase MnmE (452 aa).

Residues Arg21, Glu78, and Lys118 each contribute to the (6S)-5-formyl-5,6,7,8-tetrahydrofolate site. The 162-residue stretch at 214–375 (GMKVVIAGRP…LREHLKKSMG (162 aa)) folds into the TrmE-type G domain. Asn224 is a K(+) binding site. GTP is bound by residues 224–229 (NAGKSS), 243–249 (TNIAGTT), and 268–271 (DTAG). Ser228 lines the Mg(2+) pocket. Residues Thr243, Ile245, and Thr248 each contribute to the K(+) site. Thr249 provides a ligand contact to Mg(2+). Lys452 contacts (6S)-5-formyl-5,6,7,8-tetrahydrofolate.

The protein belongs to the TRAFAC class TrmE-Era-EngA-EngB-Septin-like GTPase superfamily. TrmE GTPase family. Homodimer. Heterotetramer of two MnmE and two MnmG subunits. K(+) serves as cofactor.

The protein localises to the cytoplasm. In terms of biological role, exhibits a very high intrinsic GTPase hydrolysis rate. Involved in the addition of a carboxymethylaminomethyl (cmnm) group at the wobble position (U34) of certain tRNAs, forming tRNA-cmnm(5)s(2)U34. The protein is tRNA modification GTPase MnmE of Actinobacillus pleuropneumoniae serotype 5b (strain L20).